The chain runs to 407 residues: MRQLLPGDTVWRNIRLATMDPQQQALYGLVDNQALIVREGHICDIVPETQLPVSGDNIHDMQGRLVTPGLIDCHTHLVFAGNRAAEWEQRLNGASYQHISAQGGGINATVSATRACAEETLYLLARERMMRLASEGVTLLEIKSGYGLELATEEKLLRVAAKLAAENAIDISPTLLAAHATPAEYRDDPDGYITLVCETMIPQLWQKGLFDAVDLFCESVGFNVAQSERVLQTAKALGIPVKGHVEQLSLLGGAQLVSRYQGLSADHIEYLDEVGVAAMRDGGTVGVLLPGAFYFLRETQRPPVELLRRYQVPVAVASDFNPGTSPFCSLHLAMNMACVQFGLTPEEAWAGVTRHAARALGRQATHGQIRAGYRADFVVWDAEQPVEIVYEPGRNPLYQRVYRGKIS.

Positions 74 and 76 each coordinate Fe(3+). Residues H74 and H76 each coordinate Zn(2+). Positions 83, 146, and 179 each coordinate 4-imidazolone-5-propanoate. An N-formimidoyl-L-glutamate-binding site is contributed by Y146. H244 lines the Fe(3+) pocket. Residue H244 coordinates Zn(2+). Q247 lines the 4-imidazolone-5-propanoate pocket. A Fe(3+)-binding site is contributed by D319. A Zn(2+)-binding site is contributed by D319. N321 and G323 together coordinate N-formimidoyl-L-glutamate. 4-imidazolone-5-propanoate is bound at residue T324.

Belongs to the metallo-dependent hydrolases superfamily. HutI family. Zn(2+) serves as cofactor. It depends on Fe(3+) as a cofactor.

The protein resides in the cytoplasm. The catalysed reaction is 4-imidazolone-5-propanoate + H2O = N-formimidoyl-L-glutamate. It functions in the pathway amino-acid degradation; L-histidine degradation into L-glutamate; N-formimidoyl-L-glutamate from L-histidine: step 3/3. Functionally, catalyzes the hydrolytic cleavage of the carbon-nitrogen bond in imidazolone-5-propanoate to yield N-formimidoyl-L-glutamate. It is the third step in the universal histidine degradation pathway. This chain is Imidazolonepropionase, found in Salmonella typhimurium (strain LT2 / SGSC1412 / ATCC 700720).